Here is a 433-residue protein sequence, read N- to C-terminus: Steroid C26-monooxygenase (433 aa).

Glycine 202 is a substrate binding site. Residue cysteine 377 coordinates heme.

This sequence belongs to the cytochrome P450 family. Heme serves as cofactor.

The catalysed reaction is cholest-4-en-3-one + 6 reduced [2Fe-2S]-[ferredoxin] + 3 O2 + 5 H(+) = (25S)-3-oxocholest-4-en-26-oate + 6 oxidized [2Fe-2S]-[ferredoxin] + 4 H2O. It participates in steroid metabolism; cholesterol degradation. Involved in the utilization of cholesterol as the sole carbon and energy source by degrading the side chain during infection. Primarily catalyzes the sequential oxidation of the terminal methyl of cholest-4-en-3-one into (25S)-26-hydroxycholest-4-en-3-one (alcohol), (25S)-26-oxocholest-4-en-3-one (aldehyde), to finally yield the carboxylic acid (25S)-3-oxocholest-4-en-26-oate. Also able to sequentially oxidize cholesterol itself, not only cholest-4-en-3-one. The protein is Steroid C26-monooxygenase (cyp125) of Mycobacterium bovis (strain ATCC BAA-935 / AF2122/97).